The chain runs to 57 residues: Protein translocase subunit SecE (57 aa).

The chain crosses the membrane as a helical span at residues 33–53 (GAGIFLVGLLGFIIFAVMSFL).

This sequence belongs to the SecE/SEC61-gamma family. As to quaternary structure, component of the Sec protein translocase complex. Heterotrimer consisting of SecY (alpha), SecG (beta) and SecE (gamma) subunits. The heterotrimers can form oligomers, although 1 heterotrimer is thought to be able to translocate proteins. Interacts with the ribosome. May interact with SecDF, and other proteins may be involved.

The protein localises to the cell membrane. Essential subunit of the Sec protein translocation channel SecYEG. Clamps together the 2 halves of SecY. May contact the channel plug during translocation. This chain is Protein translocase subunit SecE, found in Haloferax mediterranei (strain ATCC 33500 / DSM 1411 / JCM 8866 / NBRC 14739 / NCIMB 2177 / R-4) (Halobacterium mediterranei).